A 299-amino-acid polypeptide reads, in one-letter code: MCTVCGCGTSAIEGHTHEVGDDGHGHHHHDGHHDHDHDHDHHRGDHEHDDHHHAEDGSVHYSKGIAGVHVPGMSQERIIQVEKDILSKNDAYAAENRRHFERQGVFALNFVSSPGSGKTSLLVRTIKDLKDRLSISVIEGDQQTSNDAARIRETGARAIQINTGKGCHLDAHMVGHAVEDLAPEPGSALFIENVGNLVCPAAFDLGEAHKVVVLSVTEGEDKPLKYPDMFAAADLMILNKADLLPHLDFNTGFCIANALRVNPRLQTLTVSARTGEGMEAFYAWLEVSAARRAIRSKVA.

The Ni(2+) site is built by Cys2, Cys5, and Cys7. The segment at Glu18–Gly57 is disordered. Basic and acidic residues predominate over residues Gly31 to Gly57. A G-domain region spans residues Ala107–Leu268. Ni(2+)-binding residues include Cys167, His168, and Cys199. Zn(2+)-binding residues include Cys167, His168, and Cys199.

The protein belongs to the SIMIBI class G3E GTPase family. HypB/HupM subfamily.

Involved in the maturation of [NiFe] hydrogenases. Required for nickel insertion into the metal center of the hydrogenase. Exhibits a low intrinsic GTPase activity, which is essential for nickel insertion. Is able to bind 4 nickel ions per subunit. Can also bind zinc. This is Hydrogenase maturation factor HypB from Rhizobium leguminosarum bv. viciae.